An 82-amino-acid chain; its full sequence is Translational regulator CsrA (82 aa).

It belongs to the CsrA/RsmA family. As to quaternary structure, homodimer; the beta-strands of each monomer intercalate to form a hydrophobic core, while the alpha-helices form wings that extend away from the core.

The protein resides in the cytoplasm. Its function is as follows. A translational regulator that binds mRNA to regulate translation initiation and/or mRNA stability. Usually binds in the 5'-UTR at or near the Shine-Dalgarno sequence preventing ribosome-binding, thus repressing translation. Its main target seems to be the major flagellin gene, while its function is anatagonized by FliW. This Geobacillus sp. (strain WCH70) protein is Translational regulator CsrA.